A 271-amino-acid chain; its full sequence is 4-hydroxy-tetrahydrodipicolinate reductase (271 aa).

NAD(+) contacts are provided by residues 11 to 16 (GGSGRM) and E37. R38 is a binding site for NADP(+). Residues 101–103 (GTT) and 125–128 (APNM) contribute to the NAD(+) site. The Proton donor/acceptor role is filled by H158. Position 159 (H159) interacts with (S)-2,3,4,5-tetrahydrodipicolinate. Residue K162 is the Proton donor of the active site. Residue 168–169 (GT) participates in (S)-2,3,4,5-tetrahydrodipicolinate binding.

Belongs to the DapB family.

The protein resides in the cytoplasm. It catalyses the reaction (S)-2,3,4,5-tetrahydrodipicolinate + NAD(+) + H2O = (2S,4S)-4-hydroxy-2,3,4,5-tetrahydrodipicolinate + NADH + H(+). It carries out the reaction (S)-2,3,4,5-tetrahydrodipicolinate + NADP(+) + H2O = (2S,4S)-4-hydroxy-2,3,4,5-tetrahydrodipicolinate + NADPH + H(+). It participates in amino-acid biosynthesis; L-lysine biosynthesis via DAP pathway; (S)-tetrahydrodipicolinate from L-aspartate: step 4/4. Catalyzes the conversion of 4-hydroxy-tetrahydrodipicolinate (HTPA) to tetrahydrodipicolinate. This Shewanella loihica (strain ATCC BAA-1088 / PV-4) protein is 4-hydroxy-tetrahydrodipicolinate reductase.